Consider the following 593-residue polypeptide: F-box/LRR-repeat protein 17 (593 aa).

One can recognise an F-box domain in the interval Asp120–Arg177. LRR repeat units lie at residues Ile178 to Ile206, Glu207 to Thr232, Val237 to Gly262, Leu276 to Phe304, Ser335 to Leu361, Gly362 to Gly387, Cys414 to Met439, Leu477 to Leu502, and Cys503 to Gly525.

Part of a SCF (ASK-cullin-F-box) protein ligase complex. Interacts with SKP1A/ASK1, KRP4, KRP6 and KRP7. Expressed in developing pollen.

It is found in the nucleus. Its pathway is protein modification; protein ubiquitination. Its function is as follows. Essential protein for male fertility. Component of the SCF(ASK-cullin-F-box) E3 ubiquitin ligase complex SCF(FBL17), which mediates the ubiquitination and subsequent proteasomal degradation of target proteins. Enables the switch in cell cycle control leading to male germ cell lineage formation from microspores after meiosis. Targets CDKA-1 inhibitors the degradation specifically in male germ cells (e.g. KRP6 and KRP7) and thus enables CDKA-1 activation and germ cell S-phase progression. Promotes twin sperm cell production and double fertilization. This chain is F-box/LRR-repeat protein 17 (FBL17), found in Arabidopsis thaliana (Mouse-ear cress).